Here is a 381-residue protein sequence, read N- to C-terminus: Alkanesulfonate monooxygenase (381 aa).

Belongs to the SsuD family. As to quaternary structure, homotetramer.

The catalysed reaction is an alkanesulfonate + FMNH2 + O2 = an aldehyde + FMN + sulfite + H2O + 2 H(+). Its function is as follows. Catalyzes the desulfonation of aliphatic sulfonates. The polypeptide is Alkanesulfonate monooxygenase (Cronobacter sakazakii (strain ATCC BAA-894) (Enterobacter sakazakii)).